Reading from the N-terminus, the 119-residue chain is uncharacterized protein (119 aa).

Residue Cys-13 is part of the active site.

This sequence belongs to the ArsC family.

This is an uncharacterized protein from Escherichia coli (strain K12).